Here is a 351-residue protein sequence, read N- to C-terminus: D-alanine--D-alanine ligase (351 aa).

Residues 135 to 343 (NQIFLQSGQK…MEEVFSDLIE (209 aa)) enclose the ATP-grasp domain. An ATP-binding site is contributed by 167 to 222 (LETLGFPQFLKPVEGGSSVSVYKITNREQLKEKLALIFESDSKVMSQSFLTGIEVS). Mg(2+)-binding residues include Asp-298, Glu-310, and Asn-312.

This sequence belongs to the D-alanine--D-alanine ligase family. Requires Mg(2+) as cofactor. Mn(2+) is required as a cofactor.

The protein localises to the cytoplasm. It catalyses the reaction 2 D-alanine + ATP = D-alanyl-D-alanine + ADP + phosphate + H(+). Its pathway is cell wall biogenesis; peptidoglycan biosynthesis. Its function is as follows. Cell wall formation. The protein is D-alanine--D-alanine ligase of Leptospira interrogans serogroup Icterohaemorrhagiae serovar Lai (strain 56601).